A 342-amino-acid polypeptide reads, in one-letter code: Oxygen-dependent coproporphyrinogen-III oxidase (342 aa).

Ser-98 is a substrate binding site. His-102 and His-112 together coordinate a divalent metal cation. His-112 serves as the catalytic Proton donor. A substrate-binding site is contributed by 114 to 116; sequence NYR. Residues His-146 and His-176 each coordinate a divalent metal cation. The interval 266–301 is important for dimerization; sequence YVEFNLVWDRGTIFGLQTNGRTESILMSLPPLARWE.

Belongs to the aerobic coproporphyrinogen-III oxidase family. Homodimer. It depends on a divalent metal cation as a cofactor.

The protein resides in the cytoplasm. The catalysed reaction is coproporphyrinogen III + O2 + 2 H(+) = protoporphyrinogen IX + 2 CO2 + 2 H2O. It participates in porphyrin-containing compound metabolism; protoporphyrin-IX biosynthesis; protoporphyrinogen-IX from coproporphyrinogen-III (O2 route): step 1/1. Functionally, involved in the heme and chlorophyll biosynthesis. Catalyzes the aerobic oxidative decarboxylation of propionate groups of rings A and B of coproporphyrinogen-III to yield the vinyl groups in protoporphyrinogen-IX. This is Oxygen-dependent coproporphyrinogen-III oxidase from Prochlorococcus marinus (strain AS9601).